Consider the following 427-residue polypeptide: Glutamate-1-semialdehyde 2,1-aminomutase (427 aa).

Position 265 is an N6-(pyridoxal phosphate)lysine (Lys-265).

Belongs to the class-III pyridoxal-phosphate-dependent aminotransferase family. HemL subfamily. In terms of assembly, homodimer. Requires pyridoxal 5'-phosphate as cofactor.

The protein localises to the cytoplasm. It carries out the reaction (S)-4-amino-5-oxopentanoate = 5-aminolevulinate. The protein operates within porphyrin-containing compound metabolism; protoporphyrin-IX biosynthesis; 5-aminolevulinate from L-glutamyl-tRNA(Glu): step 2/2. The chain is Glutamate-1-semialdehyde 2,1-aminomutase from Stutzerimonas stutzeri (strain A1501) (Pseudomonas stutzeri).